Reading from the N-terminus, the 463-residue chain is Flotillin-like protein 2 (463 aa).

Cys-35 is lipidated: S-palmitoyl cysteine. A coiled-coil region spans residues 305–354 (EYETKVQEANWELYNKQKQAEAVLYEKQKQAEAQKAEADATFYSKQKEAE).

The protein belongs to the band 7/mec-2 family. Flotillin subfamily. May be palmitoylated.

It localises to the cell membrane. The protein resides in the membrane. Its subcellular location is the caveola. In terms of biological role, may act as a scaffolding protein within caveolar membranes, functionally participating in formation of caveolae or caveolae-like vesicles. This is Flotillin-like protein 2 (FLOT2) from Arabidopsis thaliana (Mouse-ear cress).